Reading from the N-terminus, the 519-residue chain is AarF domain-containing protein kinase 1 (519 aa).

In terms of domain architecture, Protein kinase spans 145–481 (SFEDTPLGAA…SLYRRVHISL (337 aa)). Residues 151-159 (LGAASLAQV) and Lys173 each bind ATP. Residue Asp305 is the Proton acceptor of the active site.

It belongs to the protein kinase superfamily. ADCK protein kinase family.

The protein localises to the mitochondrion. In terms of biological role, appears to be essential for maintaining mitochondrial cristae formation and mitochondrial function by acting via YME1L1 in a kinase-independent manner to regulate essential mitochondrial structural proteins OPA1 and IMMT. The action of this enzyme is not yet clear. It is not known if it has protein kinase activity and what type of substrate it would phosphorylate (Ser, Thr or Tyr). This is AarF domain-containing protein kinase 1 (ADCK1) from Gallus gallus (Chicken).